We begin with the raw amino-acid sequence, 445 residues long: Tubulin beta-1 chain (445 aa).

Residues Gln11, Glu69, Ser138, Gly142, Thr143, Gly144, Asn204, and Asn226 each contribute to the GTP site. Glu69 serves as a coordination point for Mg(2+). The tract at residues 426–445 (QDATAEDEEEYEDEEEEMAA) is disordered. Residues 429–445 (TAEDEEEYEDEEEEMAA) are compositionally biased toward acidic residues.

The protein belongs to the tubulin family. Dimer of alpha and beta chains. A typical microtubule is a hollow water-filled tube with an outer diameter of 25 nm and an inner diameter of 15 nM. Alpha-beta heterodimers associate head-to-tail to form protofilaments running lengthwise along the microtubule wall with the beta-tubulin subunit facing the microtubule plus end conferring a structural polarity. Microtubules usually have 13 protofilaments but different protofilament numbers can be found in some organisms and specialized cells. Mg(2+) serves as cofactor.

The protein resides in the cytoplasm. The protein localises to the cytoskeleton. In terms of biological role, tubulin is the major constituent of microtubules, a cylinder consisting of laterally associated linear protofilaments composed of alpha- and beta-tubulin heterodimers. Microtubules grow by the addition of GTP-tubulin dimers to the microtubule end, where a stabilizing cap forms. Below the cap, tubulin dimers are in GDP-bound state, owing to GTPase activity of alpha-tubulin. In Eleusine indica (Goosegrass), this protein is Tubulin beta-1 chain (TUBB1).